The primary structure comprises 143 residues: Small ribosomal subunit protein bS6 (143 aa).

The interval 96–143 is disordered; sequence VTEASPMAAAKEERRDDRREVKKDVAAAPVEAKEDSVEEKSEEAASEE. Positions 105–143 are enriched in basic and acidic residues; that stretch reads AKEERRDDRREVKKDVAAAPVEAKEDSVEEKSEEAASEE.

Belongs to the bacterial ribosomal protein bS6 family.

Its function is as follows. Binds together with bS18 to 16S ribosomal RNA. This chain is Small ribosomal subunit protein bS6, found in Colwellia psychrerythraea (strain 34H / ATCC BAA-681) (Vibrio psychroerythus).